A 146-amino-acid polypeptide reads, in one-letter code: Acidic phospholipase A2 CM-II (146 aa).

An N-terminal signal peptide occupies residues 1 to 21 (MNPAHLLILAAVCVSPLGAFS). The propeptide occupies 22–27 (NRPMPL). 7 cysteine pairs are disulfide-bonded: Cys-38–Cys-98, Cys-53–Cys-145, Cys-55–Cys-71, Cys-70–Cys-126, Cys-77–Cys-119, Cys-87–Cys-112, and Cys-105–Cys-117. Ca(2+) contacts are provided by Tyr-54, Gly-56, and Gly-58. Residue His-74 is part of the active site. Position 75 (Asp-75) interacts with Ca(2+). Asp-120 is an active-site residue.

This sequence belongs to the phospholipase A2 family. Group I subfamily. D49 sub-subfamily. Requires Ca(2+) as cofactor. In terms of tissue distribution, expressed by the venom gland.

The protein localises to the secreted. It catalyses the reaction a 1,2-diacyl-sn-glycero-3-phosphocholine + H2O = a 1-acyl-sn-glycero-3-phosphocholine + a fatty acid + H(+). In terms of biological role, PLA2 catalyzes the calcium-dependent hydrolysis of the 2-acyl groups in 3-sn-phosphoglycerides. Is able to suppress the acetylcholine (ACh)-evoked current mediated by alpha-7 (CHRNA7)-similar nAChRs in L.stagnalis neurons (IC(50)=37 nM) and to compete with alpha-bungarotoxin for binding to muscle- and alpha-7 neuronal nAChR types, as well as to AChBPs. In inhibition of alpha-bungarotoxin binding, this toxin is similarly active against T.californica nAChR (IC(50)=1.2 uM), human alpha-7 nAChR (IC(50)=3.2 uM), and L.stagnalis AChBP (IC(50)=1.0 uM), whereas it is not active against A.californica AChBP (IC(50)&gt;100 uM). This chain is Acidic phospholipase A2 CM-II, found in Naja kaouthia (Monocled cobra).